Consider the following 368-residue polypeptide: tRNA-specific 2-thiouridylase MnmA (368 aa).

ATP contacts are provided by residues 11–18 and M37; that span reads GMSGGVDS. Residues 97 to 99 are interaction with target base in tRNA; sequence NPD. The active-site Nucleophile is C102. A disulfide bridge links C102 with C199. G127 contacts ATP. The tract at residues 149–151 is interaction with tRNA; the sequence is KDQ. C199 functions as the Cysteine persulfide intermediate in the catalytic mechanism. The interval 311–312 is interaction with tRNA; that stretch reads RY.

This sequence belongs to the MnmA/TRMU family. In terms of assembly, interacts with TusE.

Its subcellular location is the cytoplasm. The enzyme catalyses S-sulfanyl-L-cysteinyl-[protein] + uridine(34) in tRNA + AH2 + ATP = 2-thiouridine(34) in tRNA + L-cysteinyl-[protein] + A + AMP + diphosphate + H(+). Its function is as follows. Catalyzes the 2-thiolation of uridine at the wobble position (U34) of tRNA(Lys), tRNA(Glu) and tRNA(Gln), leading to the formation of s(2)U34, the first step of tRNA-mnm(5)s(2)U34 synthesis. Sulfur is provided by IscS, via a sulfur-relay system. Binds ATP and its substrate tRNAs. In Klebsiella pneumoniae (strain 342), this protein is tRNA-specific 2-thiouridylase MnmA.